A 141-amino-acid chain; its full sequence is Hemoglobin subunit alpha-D (141 aa).

The Globin domain maps to 1 to 141; that stretch reads VLTAEDRRLL…VADVLSEKYR (141 aa). Histidine 57 and histidine 87 together coordinate heme b.

Belongs to the globin family. In terms of assembly, the deoxy-Hb is a heterotetramer of two alpha and two beta chains, but oxygenation results in dissociation to dimers. Red blood cells.

In terms of biological role, involved in oxygen transport from the lung to the various peripheral tissues. In Erythrolamprus miliaris (South American water snake), this protein is Hemoglobin subunit alpha-D (HBAD).